The primary structure comprises 316 residues: MYSRILATGSYIPANIRTNADLEKMVETSDEWITTRSGIKERRIAGENETVATMGFEAAKNALQLANICPNDIDLVLVATTSHSYAYPSAACQIQGMLDIDDAISFDLAAACTGFIYALSVADQFIKTGKVKKALVIGADINSRKLDETDRSTVILFGDGAGAVILESSDIEGIISTHLHASLDKSNALILPQTQQGEVQSGYIQMQGNATFKLAVRELSNVVEETLRDNHLDKADLDWLVPHQANLRIITATAEKLNMSLDQVVITLDKYGNTSAATVPVALDEAVRDGRIKRGQLLLLEAFGGGWTWGSALVRF.

Residues C112 and H243 contribute to the active site. Positions 244-248 (QANLR) are ACP-binding. The active site involves N273.

Belongs to the thiolase-like superfamily. FabH family. As to quaternary structure, homodimer.

It localises to the cytoplasm. The enzyme catalyses malonyl-[ACP] + acetyl-CoA + H(+) = 3-oxobutanoyl-[ACP] + CO2 + CoA. The protein operates within lipid metabolism; fatty acid biosynthesis. Its function is as follows. Catalyzes the condensation reaction of fatty acid synthesis by the addition to an acyl acceptor of two carbons from malonyl-ACP. Catalyzes the first condensation reaction which initiates fatty acid synthesis and may therefore play a role in governing the total rate of fatty acid production. Possesses both acetoacetyl-ACP synthase and acetyl transacylase activities. Its substrate specificity determines the biosynthesis of branched-chain and/or straight-chain of fatty acids. This chain is Beta-ketoacyl-[acyl-carrier-protein] synthase III, found in Histophilus somni (strain 2336) (Haemophilus somnus).